The chain runs to 391 residues: MVTVDEVRKAQRAEGPATILAIGTATPPNCVDQSTYPDYYFRITKSEHRTELKEKFQRMCDKSRIKKRYMYLTEEILKENPSMCEYMAPSLDARQDMVVVEIPKLGKEAATKAIKEWGQLKSKITHLVFCTTSGVDMPGADYQLTKLLGLRPSVKRLMMYQQGCFAGGTVLRLAKDLAENNKGARVLAVCSEITAVTFRGPSDTHLDSLVGQALFGDGAAAIIVGSDPLPDIERPLFELVSAAQTILPDSDGAIDGHLHEVGLTFHLLKDVPGLISKNIEKSLNEAFKPLDITDWNSLFWIAHPGGPAILDQVEAKLGLKPEKLEATRNILSEYGNMSSACVLLILDEVRRKSVANGHKTTGEGLEWGVLFGFGPGLTVETVVLHSVAAST.

The active site involves C164.

It belongs to the thiolase-like superfamily. Chalcone/stilbene synthases family. As to quaternary structure, homodimer.

This chain is Inactive polyketide synthase 2 (PKS2), found in Rubus idaeus (Raspberry).